The sequence spans 425 residues: Transmembrane protein 184A (425 aa).

The next 7 helical transmembrane spans lie at 51–71 (LFLT…TALL), 96–116 (LLFI…LLGG), 133–153 (FVIY…SAIM), 189–209 (TLQF…LQAF), 226–246 (VTLV…LFYF), 261–281 (FLTI…LAIL), and 303–323 (LAAG…SLAL). Positions 375-425 (QYTQQSTHEAPGPGQGGHPAPSTHPGPASGSGGGKKSRNIEKRMLIPSEDL) are disordered. Residues 392–402 (HPAPSTHPGPA) are compositionally biased toward low complexity.

The protein belongs to the TMEM184 family. In terms of tissue distribution, expressed in testis, pancreas, parotid salivary gland and mammary gland (at protein level).

The protein resides in the cell membrane. It localises to the cytoplasm. It is found in the perinuclear region. The protein localises to the cytoplasmic vesicle membrane. Its subcellular location is the early endosome membrane. The protein resides in the endosome. It localises to the cytoplasmic vesicle. It is found in the secretory vesicle membrane. Functionally, acts as a heparin receptor in vascular cells. May be involved in vesicle transport in exocrine cells and Sertoli cells. This chain is Transmembrane protein 184A (Tmem184a), found in Mus musculus (Mouse).